The following is a 78-amino-acid chain: Acyl carrier protein BQ2027_MB0103 (78 aa).

The Carrier domain occupies Met1–Gly78. Ser35 carries the post-translational modification O-(pantetheine 4'-phosphoryl)serine.

This sequence belongs to the acyl carrier protein (ACP) family. Requires pantetheine 4'-phosphate as cofactor.

The protein operates within lipid metabolism; fatty acid metabolism. Functionally, acyl-carrier protein (ACP) involved in the biosynthesis of a unique class of isonitrile lipopeptides (INLPs) that seem to play a role in metal acquisition. Is the dedicated ACP for the loading of activated acyl groups catalyzed by FadD10. This Mycobacterium bovis (strain ATCC BAA-935 / AF2122/97) protein is Acyl carrier protein BQ2027_MB0103.